A 463-amino-acid polypeptide reads, in one-letter code: Major capsid protein (463 aa).

This sequence belongs to the NCLDV major capsid protein family. Homomultimer.

It is found in the virion. Functionally, major capsid protein that self assembles to form a T=133 or T=147 icosahedral capsid. The sequence is that of Major capsid protein from Dryophytes versicolor (chameleon treefrog).